The sequence spans 324 residues: dITP/XTP pyrophosphatase (324 aa).

A unknown region spans residues 1–127 (MTKTIFESKT…KNDNNFGDTI (127 aa)). The NTP pyrophosphatase stretch occupies residues 128 to 324 (LIATHNEGKT…EVFPKWQLEN (197 aa)). Substrate is bound at residue 131–136 (THNEGK). Mg(2+) contacts are provided by Glu-164 and Asp-193. Asp-193 serves as the catalytic Proton acceptor. Residues Ser-194, 277–280 (FGYD), Lys-300, and 305–306 (HR) contribute to the substrate site.

It belongs to the HAM1 NTPase family. In terms of assembly, homodimer. Requires Mg(2+) as cofactor.

It catalyses the reaction XTP + H2O = XMP + diphosphate + H(+). The enzyme catalyses dITP + H2O = dIMP + diphosphate + H(+). The catalysed reaction is ITP + H2O = IMP + diphosphate + H(+). Pyrophosphatase that catalyzes the hydrolysis of nucleoside triphosphates to their monophosphate derivatives, with a high preference for the non-canonical purine nucleotides XTP (xanthosine triphosphate), dITP (deoxyinosine triphosphate) and ITP. Seems to function as a house-cleaning enzyme that removes non-canonical purine nucleotides from the nucleotide pool, thus preventing their incorporation into DNA/RNA and avoiding chromosomal lesions. The sequence is that of dITP/XTP pyrophosphatase from Streptococcus agalactiae serotype III (strain NEM316).